The following is a 471-amino-acid chain: MAAPEPLSPAGGAGEEAPEEDEDEAEAEDPERPNAGAGGGRSGGGGSSVSGGGGGGGAGAGGCGGPGGALTRRAVTLRVLLKDALLEPGAGVLSIYYLGKKFLGDLQPDGRIMWQETGQTFNSPSAWATHCKKLVNPAKKSGCGWASVKYKGQKLDKYKATWLRLHQLHTPATAADESPASEGEEEELLMEEEEEDVLAGVSAEDKSRRPLGKSPSEPAHPEATTPGKRVDSKIRVPVRYCMLGSRDLARNPHTLVEVTSFAAINKFQPFNVAVSSNVLFLLDFHSHLTRSEVVGYLGGRWDVNSQMLTVLRAFPCRSRLGDAETAAAIEEEIYQSLFLRGLSLVGWYHSHPHSPALPSLQDIDAQMDYQLRLQGSSNGFQPCLALLCSPYYSGNPGPESKISPFWVMPPPEMLLVEFYKGSPDLVRLQEPWSQEHTYLDKLKISLASRTPKDQSLCHVLEQVCGVLKQGS.

A compositionally biased stretch (low complexity) spans 1 to 10; it reads MAAPEPLSPA. A disordered region spans residues 1 to 63; sequence MAAPEPLSPA…GGGGAGAGGC (63 aa). An N-acetylalanine modification is found at Ala-2. Residue Ser-8 is modified to Phosphoserine. Over residues 16–29 the composition is skewed to acidic residues; sequence EAPEEDEDEAEAED. The segment covering 36–63 has biased composition (gly residues); sequence GAGGGRSGGGGSSVSGGGGGGGAGAGGC. In terms of domain architecture, RAMA spans 71–166; the sequence is TRRAVTLRVL…KYKATWLRLH (96 aa). Ser-123, Ser-125, and Trp-145 together coordinate DNA. The disordered stretch occupies residues 170–229; the sequence is TPATAADESPASEGEEEELLMEEEEEDVLAGVSAEDKSRRPLGKSPSEPAHPEATTPGKR. Ser-178 and Ser-181 each carry phosphoserine. Over residues 182 to 197 the composition is skewed to acidic residues; sequence EGEEEELLMEEEEEDV. The MPN domain maps to 272-407; it reads VAVSSNVLFL…PESKISPFWV (136 aa). Positions 349, 351, and 362 each coordinate Zn(2+). A JAMM motif motif is present at residues 349–362; the sequence is HSHPHSPALPSLQD.

The protein belongs to the peptidase M67 family. In terms of assembly, monomer. Mainly monomoric, but when binds to dsDNA, forms homotetramer assembled into two homodimers. May interact with histones; this interaction is facilitated by dsDNA binding. In terms of processing, degraded following binding to N(6)-methyladenosine methylated DNA (m6A).

Its function is as follows. Probable protease. Acts as a sensor of N(6)-methyladenosine methylation on DNA (m6A): recognizes and binds m6A DNA, leading to its degradation. Binds only double strand DNA (dsDNA) in a sequence-independent manner. This is MPN domain-containing protein from Homo sapiens (Human).